A 454-amino-acid chain; its full sequence is Ig mu chain C region (454 aa).

The interval 1 to 105 is CH1; it reads SPSSPTVFPL…NKDLRVPIPV (105 aa). C27 and C88 are joined by a disulfide. Residues N45, N112, N192, N210, N238, N257, and N280 are each glycosylated (N-linked (GlcNAc...) asparagine). The segment at 106 to 218 is CH2; that stretch reads VTEMNPNVSV…KNVSSTCAAS (113 aa). An intrachain disulfide couples C135 to C198. Residues 219 to 324 form a CH3 region; the sequence is PSTDIQAFPI…QKKFISKPRE (106 aa). Cystine bridges form between C245–C304 and C352–C414. The interval 325-454 is CH4; the sequence is MNKTPPAVYQ…IMSDAGGTCY (130 aa). A glycan (N-linked (GlcNAc...) asparagine) is linked at N441.

In Mesocricetus auratus (Golden hamster), this protein is Ig mu chain C region.